Consider the following 430-residue polypeptide: Lipoyl synthase, mitochondrial (430 aa).

Residues 1-37 (MAASTGKLRTLFSAHSSLSARPSSALPALRLTILRSY) constitute a mitochondrion transit peptide. Residues 40–56 (TTPPDSSISNPSNPSTT) are compositionally biased toward low complexity. The disordered stretch occupies residues 40–64 (TTPPDSSISNPSNPSTTVKRPPTAF). [4Fe-4S] cluster contacts are provided by Cys-141, Cys-146, Cys-152, Cys-172, Cys-176, Cys-179, and Ser-387. A Radical SAM core domain is found at 155-376 (GSSKSAATAT…KERALEMGFL (222 aa)).

Belongs to the radical SAM superfamily. Lipoyl synthase family. The cofactor is [4Fe-4S] cluster.

It is found in the mitochondrion. The enzyme catalyses [[Fe-S] cluster scaffold protein carrying a second [4Fe-4S](2+) cluster] + N(6)-octanoyl-L-lysyl-[protein] + 2 oxidized [2Fe-2S]-[ferredoxin] + 2 S-adenosyl-L-methionine + 4 H(+) = [[Fe-S] cluster scaffold protein] + N(6)-[(R)-dihydrolipoyl]-L-lysyl-[protein] + 4 Fe(3+) + 2 hydrogen sulfide + 2 5'-deoxyadenosine + 2 L-methionine + 2 reduced [2Fe-2S]-[ferredoxin]. It participates in protein modification; protein lipoylation via endogenous pathway; protein N(6)-(lipoyl)lysine from octanoyl-[acyl-carrier-protein]: step 2/2. Functionally, catalyzes the radical-mediated insertion of two sulfur atoms into the C-6 and C-8 positions of the octanoyl moiety bound to the lipoyl domains of lipoate-dependent enzymes, thereby converting the octanoylated domains into lipoylated derivatives. The polypeptide is Lipoyl synthase, mitochondrial (Blastomyces gilchristii (strain SLH14081) (Blastomyces dermatitidis)).